A 273-amino-acid polypeptide reads, in one-letter code: MALIMKGKPVADAIYEELQPMTSLNLTLGIIKYKGSDAGGYLSGLSKAAQRLNVQLRVNEVEQFQELTQSVVVMGKDSQVHGILLLKPFPKEWNFRQASDLIPPEKDVDALHPVNLGKLAQGRGNLVPATPQAVLSILDFYNVLPLEGASALVIGRSEAVGLPAFLQLMQRNATVTVAHSRTKDLPSLSRQADLVVVAVGKPNFLTKDHVKEGAVVIDVGTNVLEDGKVVGDVDRENVEPLVRAITPVPGGVGSVTTACLFKNLFLCYQEQTR.

Residues 155-157 (GRS), S180, and T221 contribute to the NADP(+) site.

It belongs to the tetrahydrofolate dehydrogenase/cyclohydrolase family. As to quaternary structure, homodimer.

The catalysed reaction is (6R)-5,10-methylene-5,6,7,8-tetrahydrofolate + NADP(+) = (6R)-5,10-methenyltetrahydrofolate + NADPH. It catalyses the reaction (6R)-5,10-methenyltetrahydrofolate + H2O = (6R)-10-formyltetrahydrofolate + H(+). Its pathway is one-carbon metabolism; tetrahydrofolate interconversion. Catalyzes the oxidation of 5,10-methylenetetrahydrofolate to 5,10-methenyltetrahydrofolate and then the hydrolysis of 5,10-methenyltetrahydrofolate to 10-formyltetrahydrofolate. This Coprothermobacter proteolyticus (strain ATCC 35245 / DSM 5265 / OCM 4 / BT) protein is Bifunctional protein FolD.